An 85-amino-acid polypeptide reads, in one-letter code: U4-theraphotoxin-Hhn1a (85 aa).

The N-terminal stretch at 1–22 is a signal peptide; sequence MKVTLIAILTCAAVLVLHTTAA. The propeptide occupies 23 to 48; sequence EELEAESQPMEVGMPDTELAAVDEER. Intrachain disulfides connect Cys52–Cys66, Cys56–Cys77, and Cys71–Cys82.

Belongs to the neurotoxin 12 (Hwtx-2) family. 02 (Hwtx-2) subfamily. In terms of assembly, monomer. Expressed by the venom gland.

Its subcellular location is the secreted. Functionally, neurotoxin active on both insects and mammals. This is U4-theraphotoxin-Hhn1a from Cyriopagopus hainanus (Chinese bird spider).